The chain runs to 285 residues: Ribosomal RNA small subunit methyltransferase A (285 aa).

Asparagine 29, leucine 31, glycine 56, glutamate 77, aspartate 102, and asparagine 123 together coordinate S-adenosyl-L-methionine.

Belongs to the class I-like SAM-binding methyltransferase superfamily. rRNA adenine N(6)-methyltransferase family. RsmA subfamily.

It localises to the cytoplasm. The catalysed reaction is adenosine(1518)/adenosine(1519) in 16S rRNA + 4 S-adenosyl-L-methionine = N(6)-dimethyladenosine(1518)/N(6)-dimethyladenosine(1519) in 16S rRNA + 4 S-adenosyl-L-homocysteine + 4 H(+). In terms of biological role, specifically dimethylates two adjacent adenosines (A1518 and A1519) in the loop of a conserved hairpin near the 3'-end of 16S rRNA in the 30S particle. May play a critical role in biogenesis of 30S subunits. The protein is Ribosomal RNA small subunit methyltransferase A of Clostridium perfringens (strain ATCC 13124 / DSM 756 / JCM 1290 / NCIMB 6125 / NCTC 8237 / Type A).